The primary structure comprises 160 residues: Phosphopantetheine adenylyltransferase (160 aa).

Residue S11 coordinates substrate. ATP-binding positions include 11–12 (SF) and H19. Substrate-binding residues include K43, L75, and R89. Residues 90–92 (GLR), E100, and 125–131 (YSFISSS) contribute to the ATP site.

It belongs to the bacterial CoaD family. As to quaternary structure, homohexamer. Mg(2+) serves as cofactor.

Its subcellular location is the cytoplasm. It catalyses the reaction (R)-4'-phosphopantetheine + ATP + H(+) = 3'-dephospho-CoA + diphosphate. The protein operates within cofactor biosynthesis; coenzyme A biosynthesis; CoA from (R)-pantothenate: step 4/5. Functionally, reversibly transfers an adenylyl group from ATP to 4'-phosphopantetheine, yielding dephospho-CoA (dPCoA) and pyrophosphate. This is Phosphopantetheine adenylyltransferase from Staphylococcus aureus (strain Mu3 / ATCC 700698).